A 251-amino-acid polypeptide reads, in one-letter code: Short chain dehydrogenase gsfK (251 aa).

5 residues coordinate NADP(+): L14, T33, E60, N88, and K122. Active-site proton donor residues include S143 and Y161. NADP(+)-binding residues include Y161, K165, V192, and T194. The active-site Lowers pKa of active site Tyr is K165.

Belongs to the short-chain dehydrogenases/reductases (SDR) family.

The protein operates within secondary metabolite biosynthesis; terpenoid biosynthesis. Short chain dehydrogenase; part of the gene cluster that mediates the biosynthesis of griseofulvin, an important antifungal drug that has been in use for a long time for treating dermatophyte infections. The first step of the pathway is the formation of the heptaketide backbone by gsfA which is initiated by priming with acetyl-CoA, followed by sequential condensations of 6 malonyl-CoA units. The resulting benzophenone can undergo a spontaneous dehydration to form norlichexanthone. However, the true precursor for the griseofulvin biosynthesis is not norlichexanthone, but the heptaketide benzophenone that is O-methylated at 3-OH by gsfB to produce griseophenone D which is further methylated at 9-OH by gsfC to yield griseophenone C. Griseophenone C is then substrate of halogenase gsfI which is responsible for the regio-specific chlorination at the C13 position to form griseophenone B. The cytochrome P450 gsfF catalyzes the coupling of orcinol and phloroglucinol rings in griseophenone B to form desmethyl-dehydrogriseofulvin A which is further methylated at 5-OH by gsfD to yield dehydrogriseofulvin. Finally, gsfE performs stereospecific reduction of enone 18 of dehydrogriseofulvin to afford the final product griseofulvin. The exact role of gsfK within the pathway has not been identified yet. This chain is Short chain dehydrogenase gsfK, found in Penicillium aethiopicum.